Reading from the N-terminus, the 290-residue chain is Ciliary microtubule inner protein 6 (290 aa).

The tract at residues 76 to 112 is disordered; sequence ENQGDWWPHGKGLENPFQPPYDTKSTQRSDFKKPTCP. Mn regions lie at residues 128–160 and 213–246; these read GIVP…ARKT and SAES…IRVA. Positions 197-228 are disordered; the sequence is SGSCSSEQSKKTEKGNSAESKMISPGLCRQNS.

Its subcellular location is the cell projection. The protein localises to the cilium. This Bos taurus (Bovine) protein is Ciliary microtubule inner protein 6 (CIMIP6).